Reading from the N-terminus, the 108-residue chain is Peptidyl-prolyl cis-trans isomerase Fkbp12 (108 aa).

Positions 1 to 21 (MGVQVVPIAPGDGSTYPKNGQ) are disordered. Residues 20 to 108 (GQKVTVHYTG…TFDVELLKVE (89 aa)) form the PPIase FKBP-type domain.

It belongs to the FKBP-type PPIase family. FKBP1 subfamily.

Its subcellular location is the cytoplasm. The enzyme catalyses [protein]-peptidylproline (omega=180) = [protein]-peptidylproline (omega=0). In terms of biological role, PPIases accelerate the folding of proteins. It catalyzes the cis-trans isomerization of proline imidic peptide bonds in oligopeptides. Binds to ligand-free TGF beta type I receptor, from which it is released upon a ligand-induced, type II receptor mediated phosphorylation of the type I receptor. Binding is inhibitory to the signaling pathways of the TGF beta family ligands. In Drosophila melanogaster (Fruit fly), this protein is Peptidyl-prolyl cis-trans isomerase Fkbp12.